The chain runs to 269 residues: Tryptophan synthase alpha chain (269 aa).

Residues Glu-49 and Asp-60 each act as proton acceptor in the active site.

Belongs to the TrpA family. In terms of assembly, tetramer of two alpha and two beta chains.

The catalysed reaction is (1S,2R)-1-C-(indol-3-yl)glycerol 3-phosphate + L-serine = D-glyceraldehyde 3-phosphate + L-tryptophan + H2O. The protein operates within amino-acid biosynthesis; L-tryptophan biosynthesis; L-tryptophan from chorismate: step 5/5. Functionally, the alpha subunit is responsible for the aldol cleavage of indoleglycerol phosphate to indole and glyceraldehyde 3-phosphate. The polypeptide is Tryptophan synthase alpha chain (Pseudomonas entomophila (strain L48)).